The sequence spans 73 residues: uncharacterized protein (73 aa).

Positions Met-1 to Ser-21 are cleaved as a signal peptide. A compositionally biased stretch (low complexity) spans Met-1–Gly-38. A disordered region spans residues Met-1–His-43. N-linked (GlcNAc...) asparagine glycosylation is present at Asn-34.

The protein resides in the secreted. This is an uncharacterized protein from Dictyostelium discoideum (Social amoeba).